Reading from the N-terminus, the 777-residue chain is Transcriptional regulator QRICH1 (777 aa).

Position 1 is an N-acetylmethionine (Met1). The 43-residue stretch at 6–48 folds into the CARD domain; the sequence is ENTISFEEYIRVKARSVPQHRMKEFLDSLASKGPEALQEFQQT. Disordered regions lie at residues 140 to 164 and 219 to 240; these read IQGQ…SPSQ and ALSP…VGTA. The residue at position 346 (Ser346) is a Phosphoserine. Glycyl lysine isopeptide (Lys-Gly) (interchain with G-Cter in SUMO2) cross-links involve residues Lys354 and Lys359. The tract at residues 420-440 is disordered; it reads QQQPQQQTAQEQTPPPQQQQQ. The residue at position 465 (Ser465) is a Phosphoserine.

In terms of tissue distribution, expressed highly in prefrontal cortex, craniofacial area and near the limbs of mouse embryos. Expressed in heart, skeletal muscle, liver, kidney, lung, brain, spleen, intestine and growth plate in mice.

It is found in the nucleus. It localises to the cytoplasm. The protein resides in the cell membrane. Transcriptional regulator that acts as a mediator of the integrated stress response (ISR) through transcriptional control of protein homeostasis under conditions of ER stress. Controls the outcome of the unfolded protein response (UPR), an ER-stress response pathway that either promotes recovery of ER homeostasis and cell survival, or triggers the terminal UPR which elicits programmed cell death when ER stress is prolonged and unresolved. ER stress induces QRICH1 translation by a ribosome translation re-initiation mechanism in response to EIF2S1/eIF-2-alpha phosphorylation, and stress-induced QRICH1 regulates a transcriptional program associated with protein translation, protein secretion-mediated proteotoxicity and cell death during the terminal UPR. May cooperate with ATF4 transcription factor signaling to regulate ER homeostasis which is critical for cell viability. Up-regulates CASP3/caspase-3 activity in epithelial cells under ER stress. Central regulator of proteotoxicity associated with ER stress-mediated inflammatory diseases in the intestines and liver. Involved in chondrocyte hypertrophy, a process required for normal longitudinal bone growth. The sequence is that of Transcriptional regulator QRICH1 from Mus musculus (Mouse).